A 344-amino-acid chain; its full sequence is D-amino-acid oxidase (344 aa).

Residues alanine 11, serine 14, serine 49, glycine 53, asparagine 55, and isoleucine 167 each contribute to the FAD site. Residues tyrosine 229 and arginine 290 each coordinate (R)-lactate. The anthranilate site is built by tyrosine 229 and arginine 290. Residues arginine 290, serine 321, glycine 324, tyrosine 325, and glutamine 326 each coordinate FAD.

It belongs to the DAMOX/DASOX family. FAD serves as cofactor.

The protein resides in the peroxisome. The enzyme catalyses a D-alpha-amino acid + O2 + H2O = a 2-oxocarboxylate + H2O2 + NH4(+). It carries out the reaction D-alanine + O2 + H2O = pyruvate + H2O2 + NH4(+). Functionally, catalyzes the oxidative deamination of D-amino acids with broad substrate specificity. Enables the organism to utilize D-amino acids as a source of nutrients. Enables the organism to utilize D-alanine as a source of nitrogen. The polypeptide is D-amino-acid oxidase (Komagataella phaffii (strain GS115 / ATCC 20864) (Yeast)).